A 430-amino-acid polypeptide reads, in one-letter code: Putative golgin subfamily A member 8D (430 aa).

Residues 2–217 (EWKLEQSMRE…LTAQLSLMAL (216 aa)) are a coiled coil. Disordered stretches follow at residues 138 to 158 (LREQ…QEER), 217 to 239 (LPGE…RPMP), 290 to 331 (PITK…GVAA), and 382 to 406 (PVQG…QDHQ). Positions 222 to 235 (HGGEHLDSEGEEAP) are enriched in basic and acidic residues. The segment covering 303-316 (PGGGHHQAGPGQGG) has biased composition (gly residues).

This sequence belongs to the GOLGA8 family.

This chain is Putative golgin subfamily A member 8D (GOLGA8DP), found in Homo sapiens (Human).